The sequence spans 35 residues: Putative neurotoxin (35 aa).

Residues Lys-1–Tyr-35 form the LCN-type CS-alpha/beta domain.

As to expression, expressed by the venom gland.

The protein localises to the secreted. Functionally, causes paralysis and death in insects (A.domestica). The polypeptide is Putative neurotoxin (Rhopalurus junceus (Caribbean blue scorpion)).